Reading from the N-terminus, the 156-residue chain is ATP synthase subunit b (156 aa).

A helical transmembrane segment spans residues 7–27; the sequence is LIGQTVAFIIFVWFCMKFVWP.

Belongs to the ATPase B chain family. As to quaternary structure, F-type ATPases have 2 components, F(1) - the catalytic core - and F(0) - the membrane proton channel. F(1) has five subunits: alpha(3), beta(3), gamma(1), delta(1), epsilon(1). F(0) has three main subunits: a(1), b(2) and c(10-14). The alpha and beta chains form an alternating ring which encloses part of the gamma chain. F(1) is attached to F(0) by a central stalk formed by the gamma and epsilon chains, while a peripheral stalk is formed by the delta and b chains.

It is found in the cell inner membrane. F(1)F(0) ATP synthase produces ATP from ADP in the presence of a proton or sodium gradient. F-type ATPases consist of two structural domains, F(1) containing the extramembraneous catalytic core and F(0) containing the membrane proton channel, linked together by a central stalk and a peripheral stalk. During catalysis, ATP synthesis in the catalytic domain of F(1) is coupled via a rotary mechanism of the central stalk subunits to proton translocation. Its function is as follows. Component of the F(0) channel, it forms part of the peripheral stalk, linking F(1) to F(0). The polypeptide is ATP synthase subunit b (Shewanella sp. (strain ANA-3)).